Consider the following 113-residue polypeptide: Hydrogenase maturation factor HybF (113 aa).

Ni(2+) contacts are provided by His2 and Glu3. Cys73, Cys76, Cys89, and Cys92 together coordinate Zn(2+).

Belongs to the HypA/HybF family. HybF subfamily. As to quaternary structure, monomer.

In terms of biological role, involved in the maturation of [NiFe] hydrogenases. Required for nickel insertion into the metal center of the hydrogenase. HybF is involved in maturation of hydrogenases 1 and 2. It may partially substitute for the function of HypA and vice versa. This Escherichia coli (strain K12) protein is Hydrogenase maturation factor HybF.